Consider the following 103-residue polypeptide: Large ribosomal subunit protein bL21 (103 aa).

The protein belongs to the bacterial ribosomal protein bL21 family. Part of the 50S ribosomal subunit. Contacts protein L20.

This protein binds to 23S rRNA in the presence of protein L20. The sequence is that of Large ribosomal subunit protein bL21 from Beijerinckia indica subsp. indica (strain ATCC 9039 / DSM 1715 / NCIMB 8712).